We begin with the raw amino-acid sequence, 398 residues long: Enoate reductase 1 (398 aa).

FMN contacts are provided by threonine 37 and histidine 191. Positions 191 and 194 each coordinate substrate. Tyrosine 196 (proton donor) is an active-site residue. FMN-binding residues include arginine 243 and arginine 348. Tyrosine 375 provides a ligand contact to substrate.

This sequence belongs to the NADH:flavin oxidoreductase/NADH oxidase family. As to quaternary structure, homodimer or heterodimer. Requires FMN as cofactor.

It catalyses the reaction butanoate + NAD(+) = (2E)-2-butenoate + NADH + H(+). Functionally, enoate reductase with broad substrate specificity for different alpha,beta-unsaturated carbonyl compounds. Prefers NADPH over NADH as cofactor. The polypeptide is Enoate reductase 1 (KYE1) (Kluyveromyces lactis (strain ATCC 8585 / CBS 2359 / DSM 70799 / NBRC 1267 / NRRL Y-1140 / WM37) (Yeast)).